The sequence spans 549 residues: Probable protein kinase UbiB (549 aa).

A Protein kinase domain is found at 123–501 (DFDNTPLASA…QQKAHKSNYL (379 aa)). ATP is bound by residues 129 to 137 (LASASISQV) and K152. The active-site Proton acceptor is the D287. Helical transmembrane passes span 498 to 518 (SNYL…LFNQ) and 520 to 540 (ATLW…LLGW).

This sequence belongs to the ABC1 family. UbiB subfamily.

Its subcellular location is the cell inner membrane. The protein operates within cofactor biosynthesis; ubiquinone biosynthesis [regulation]. Is probably a protein kinase regulator of UbiI activity which is involved in aerobic coenzyme Q (ubiquinone) biosynthesis. The polypeptide is Probable protein kinase UbiB (Shewanella woodyi (strain ATCC 51908 / MS32)).